The chain runs to 483 residues: Sodium/pantothenate symporter (483 aa).

Residues 1–2 (MQ) lie on the Periplasmic side of the membrane. The chain crosses the membrane as a helical span at residues 3-23 (LEVILPLVAYLVVVFGISVYA). The Cytoplasmic segment spans residues 24–42 (MRKRSTGTFLNEYFLGSRS). A helical transmembrane segment spans residues 43–63 (MGGIVLAMTLTATYISASSFI). Topologically, residues 64 to 73 (GGPGAAYKYG) are periplasmic. Residues 74 to 94 (LGWVLLAMIQLPAVWLSLGIL) form a helical membrane-spanning segment. The Cytoplasmic portion of the chain corresponds to 95–123 (GKKFAILARRYNAVTLNDMLFARYQSRLL). A helical transmembrane segment spans residues 124 to 144 (VWLASLSLLVAFVGAMTVQFI). The Periplasmic portion of the chain corresponds to 145-157 (GGARLLETAAGIP). Residues 158 to 178 (YETGLLIFGISIALYTAFGGF) traverse the membrane as a helical segment. Residues 179 to 189 (RASVLNDTMQG) are Cytoplasmic-facing. A helical membrane pass occupies residues 190 to 210 (LVMLIGTVVLLIGVVHAAGGL). At 211 to 232 (SNAVQTLQTIDPQLVTPQGADD) the chain is on the periplasmic side. The chain crosses the membrane as a helical span at residues 233 to 253 (ILSPAFMTSFWVLVCFGVIGL). Over 254–272 (PHTAVRCISYKDSKAVHRG) the chain is Cytoplasmic. The helical transmembrane segment at 273-293 (IIIGTIVVAILMFGMHLAGAL) threads the bilayer. Over 294–305 (GRAVIPDLTVPD) the chain is Periplasmic. Residues 306–326 (LVIPTLMVKVLPPFAAGIFLA) traverse the membrane as a helical segment. Residues 327–368 (APMAAIMSTINAQLLQSSATIIKDLYLNIRPDQMQNETRLKR) lie on the Cytoplasmic side of the membrane. The chain crosses the membrane as a helical span at residues 369-389 (MSAVITLVLGALLLLAAWKPP). The Periplasmic portion of the chain corresponds to 390-391 (EM). Residues 392 to 412 (IIWLNLLAFGGLEAVFLWPLV) form a helical membrane-spanning segment. The Cytoplasmic segment spans residues 413–423 (LGLYWERANAK). The chain crosses the membrane as a helical span at residues 424 to 444 (GALSAMIVGGVLYAVLATLNI). A topological domain (periplasmic) is located at residue Q445. A helical membrane pass occupies residues 446–466 (YLGFHPIVPSLLLSLLAFLVG). The Cytoplasmic segment spans residues 467-483 (NRFGTSVPQATVLTTDK).

Belongs to the sodium:solute symporter (SSF) (TC 2.A.21) family.

It localises to the cell inner membrane. It catalyses the reaction (R)-pantothenate(in) + Na(+)(in) = (R)-pantothenate(out) + Na(+)(out). Its activity is regulated as follows. Pantothenate uptake is not reduced in osmotically shocked cells or by ATP depletion with arsenate, but is reduced greater than 90% by the dissipation of the membrane electrochemical gradient with 2,4-dinitrophenol. Functionally, catalyzes the sodium-dependent uptake of extracellular pantothenate. This Escherichia coli (strain K12) protein is Sodium/pantothenate symporter.